A 369-amino-acid polypeptide reads, in one-letter code: Molybdenum import ATP-binding protein ModC 1 (369 aa).

Residues Lys10–Ala240 enclose the ABC transporter domain. Gly42–Thr49 is a binding site for ATP. In terms of domain architecture, Mop spans Ala297–Gly367.

Belongs to the ABC transporter superfamily. Molybdate importer (TC 3.A.1.8) family. The complex is composed of two ATP-binding proteins (ModC), two transmembrane proteins (ModB) and a solute-binding protein (ModA).

The protein resides in the cell inner membrane. The enzyme catalyses molybdate(out) + ATP + H2O = molybdate(in) + ADP + phosphate + H(+). Its function is as follows. Part of the ABC transporter complex ModABC involved in molybdenum import. Responsible for energy coupling to the transport system. The sequence is that of Molybdenum import ATP-binding protein ModC 1 from Bradyrhizobium diazoefficiens (strain JCM 10833 / BCRC 13528 / IAM 13628 / NBRC 14792 / USDA 110).